A 328-amino-acid polypeptide reads, in one-letter code: D-cysteine desulfhydrase (328 aa).

Lys51 carries the post-translational modification N6-(pyridoxal phosphate)lysine.

It belongs to the ACC deaminase/D-cysteine desulfhydrase family. In terms of assembly, homodimer. Requires pyridoxal 5'-phosphate as cofactor.

The enzyme catalyses D-cysteine + H2O = hydrogen sulfide + pyruvate + NH4(+) + H(+). Catalyzes the alpha,beta-elimination reaction of D-cysteine and of several D-cysteine derivatives. It could be a defense mechanism against D-cysteine. This is D-cysteine desulfhydrase from Klebsiella pneumoniae subsp. pneumoniae (strain ATCC 700721 / MGH 78578).